Reading from the N-terminus, the 402-residue chain is uncharacterized protein (402 aa).

The protein belongs to the peptidase M20 family.

This is an uncharacterized protein from Sinorhizobium fredii (strain NBRC 101917 / NGR234).